Here is a 295-residue protein sequence, read N- to C-terminus: Tyrosine recombinase XerC (295 aa).

Positions 1 to 85 (MLTALNRYWD…ALRRFLSFLV (85 aa)) constitute a Core-binding (CB) domain. Residues 106-285 (HLPKNMDGEQ…NFQHLAEVYD (180 aa)) form the Tyr recombinase domain. Catalysis depends on residues arginine 145, lysine 169, histidine 237, arginine 240, and histidine 263. Tyrosine 272 (O-(3'-phospho-DNA)-tyrosine intermediate) is an active-site residue.

This sequence belongs to the 'phage' integrase family. XerC subfamily. As to quaternary structure, forms a cyclic heterotetrameric complex composed of two molecules of XerC and two molecules of XerD.

Its subcellular location is the cytoplasm. Its function is as follows. Site-specific tyrosine recombinase, which acts by catalyzing the cutting and rejoining of the recombining DNA molecules. The XerC-XerD complex is essential to convert dimers of the bacterial chromosome into monomers to permit their segregation at cell division. It also contributes to the segregational stability of plasmids. This is Tyrosine recombinase XerC from Haemophilus influenzae (strain 86-028NP).